Here is a 353-residue protein sequence, read N- to C-terminus: RNA replication protein (353 aa).

The 108-residue stretch at 137-244 folds into the RdRp catalytic domain; sequence GVCTESDYEA…NRALFIKDTH (108 aa).

This sequence belongs to the potexviruses/carlaviruses RNA replication protein family.

The catalysed reaction is RNA(n) + a ribonucleoside 5'-triphosphate = RNA(n+1) + diphosphate. It catalyses the reaction ATP + H2O = ADP + phosphate + H(+). Functionally, RNA replication. The central part of this protein possibly functions as an ATP-binding helicase. The sequence is that of RNA replication protein from Potato virus S (strain Peruvian).